A 528-amino-acid polypeptide reads, in one-letter code: Ulvan lyase, short isoform (528 aa).

Residues 1 to 29 form the signal peptide; that stretch reads MKINLSMRELVSRLSTTLKTAIALSVLTA. Cysteine 30 is lipidated: N-palmitoyl cysteine. Cysteine 30 carries S-diacylglycerol cysteine lipidation. 151-152 is a substrate binding site; it reads SH. The Proton donor/acceptor role is filled by histidine 152. Ca(2+)-binding residues include aspartate 218, aspartate 228, and lysine 230. Substrate is bound by residues tyrosine 309 and arginine 326. Ca(2+)-binding residues include asparagine 329, aspartate 332, and phenylalanine 334. Histidine 390 contacts substrate.

This sequence belongs to the polysaccharide lyase 24 family.

Its subcellular location is the secreted. It localises to the cell membrane. Functionally, ulvan lyase involved in ulvan degradation. Ulvan is the main polysaccharide component of the Ulvales (green seaweed) cell wall. It is composed of disaccharide building blocks comprising 3-sulfated rhamnose (Rha3S) linked to D-glucuronic acid (GlcA), L-iduronic acid (IduA), or D-xylose (Xyl). Ulvan lyase catalyzes preferentially the endolytic cleavage of the glycosidic bond between Rha3S and the uronic acid GlcA, but not IduA, producing oligosaccharides that have unsaturated 4-deoxy-L-threo-hex-4-enopyranosiduronic acid (deltaUA) at the non-reducing end. The most abundant end products in the degradation of the ulvan polysaccharide were deltaUA-Rha3S disaccharides and deltaUA-Rha3S-IduA-Rha3S and deltaUA-Rha3S-Xyl-Rha3S tetrasaccharides. The chain is Ulvan lyase, short isoform from Alteromonas sp. (strain LOR).